The sequence spans 149 residues: Calmodulin-2 (149 aa).

A2 carries the post-translational modification N-acetylalanine. 4 consecutive EF-hand domains span residues 8–43, 44–79, 81–116, and 117–149; these read EQIAEFKEAFSLFDKDGDGCITTKELGTVMRSLGQN, PTEAELQDMINEVDADGNGTIDFPEFLNLMAKKMKD, DSEEELKEAFRVFDKDQNGFISAAELRHVMTNLGEK, and LTDEEVDEMIREADVDGDGQINYEEFVKVMMAK. The Ca(2+) site is built by D21, D23, D25, C27, E32, D57, D59, N61, T63, E68, D94, D96, N98, and E105. N6,N6,N6-trimethyllysine is present on K116. 5 residues coordinate Ca(2+): D130, D132, D134, Q136, and E141.

It belongs to the calmodulin family.

In terms of biological role, calmodulin mediates the control of a large number of enzymes, ion channels and other proteins by Ca(2+). Among the enzymes to be stimulated by the calmodulin-Ca(2+) complex are a number of protein kinases and phosphatases. This is Calmodulin-2 (CAM2) from Oryza sativa subsp. indica (Rice).